The primary structure comprises 25 residues: Ocellatin-L2 (25 aa).

The residue at position 25 (Leu-25) is a Leucine amide.

It belongs to the frog skin active peptide (FSAP) family. Ocellatin subfamily. Expressed by the skin glands.

The protein resides in the secreted. Its function is as follows. Shows a low activity in stimulating insulin release from rat BRIN-BD11 beta cells, and acts without loss of integrity of the plasma membrane. Does not show antibacterial (E.coli and S.aureus). Does not show hemolytic activity against human erythrocytes. The protein is Ocellatin-L2 of Leptodactylus laticeps (Santa Fe frog).